Consider the following 170-residue polypeptide: Peptide deformylase (170 aa).

Residues C91 and H133 each contribute to the Fe cation site. Residue E134 is part of the active site. H137 is a binding site for Fe cation.

The protein belongs to the polypeptide deformylase family. The cofactor is Fe(2+).

It catalyses the reaction N-terminal N-formyl-L-methionyl-[peptide] + H2O = N-terminal L-methionyl-[peptide] + formate. In terms of biological role, removes the formyl group from the N-terminal Met of newly synthesized proteins. Requires at least a dipeptide for an efficient rate of reaction. N-terminal L-methionine is a prerequisite for activity but the enzyme has broad specificity at other positions. This chain is Peptide deformylase, found in Histophilus somni (strain 129Pt) (Haemophilus somnus).